Here is a 259-residue protein sequence, read N- to C-terminus: uncharacterized protein (259 aa).

One can recognise an ABC transporter domain in the interval 4-248 (LQTTNLSKTY…SILDTLSVLG (245 aa)). 42–49 (GPSGSGKT) is an ATP binding site.

It belongs to the ABC transporter superfamily.

This is an uncharacterized protein from Bacillus subtilis (strain 168).